The sequence spans 506 residues: Cytochrome P450 monooxygenase atr2 (506 aa).

The helical transmembrane segment at 18–38 threads the bilayer; it reads VFAGLVLASLLTTTYCIWNIF. Heme is bound at residue Cys-451.

It belongs to the cytochrome P450 family. Heme is required as a cofactor.

It is found in the membrane. It carries out the reaction 4-O-demethylbarbatate + reduced [NADPH--hemoprotein reductase] + O2 = proatranorin II + oxidized [NADPH--hemoprotein reductase] + H2O + H(+). The catalysed reaction is proatranorin II + reduced [NADPH--hemoprotein reductase] + O2 = proatranorin III + oxidized [NADPH--hemoprotein reductase] + 2 H2O + H(+). The enzyme catalyses proatranorin I + reduced [NADPH--hemoprotein reductase] + O2 = proatranorin IV + oxidized [NADPH--hemoprotein reductase] + H2O + H(+). It catalyses the reaction proatranorin IV + reduced [NADPH--hemoprotein reductase] + O2 = atranorin + oxidized [NADPH--hemoprotein reductase] + 2 H2O + H(+). The protein operates within secondary metabolite biosynthesis; terpenoid biosynthesis. Its function is as follows. Cytochrome P450 monooxygenase; part of the gene cluster that mediates the biosynthesis of atranorin, a depside of polyketide origin that accumulates in the cortical or medullary layers of lichen thalli. Atr2 performs the oxidation at the C-9 position of 4-O-demethylbarbatic acid to yield proatranorin III via proatranorin II. Atr2 is also able to oxidize the atr3 product proatranorin I to produce the final compound atranorin. The first step in the pathway is performed by the non-reducing polyketide synthase atr1 that produces 4-O-demethylbarbatic acid composed of two 3-methylorsellinic acid (3MOA) moieties. The pathway continues with the actions of the cytochrome P450 monooygenase atr2 that catalizes the oxidation of c-9 and the O-methyltransferase atr3 that performs the methylation of the carboxyl group to yield atranorin, via the proatranorin II and III intermediates if atr2 acts first, or the proatranorin I intermediate if atr3 acts first. In Stereocaulon alpinum (Alpine snow lichen), this protein is Cytochrome P450 monooxygenase atr2.